The following is a 356-amino-acid chain: Tyrosine recombinase XerS (356 aa).

Positions 16 to 121 constitute a Core-binding (CB) domain; it reads LMPWFVLEYY…ALSSLYKYLT (106 aa). One can recognise a Tyr recombinase domain in the interval 169–354; the sequence is KFLDYVENEY…VNDEQKNALD (186 aa). Residues arginine 210, lysine 234, histidine 306, arginine 309, and histidine 332 contribute to the active site. Tyrosine 341 acts as the O-(3'-phospho-DNA)-tyrosine intermediate in catalysis.

It belongs to the 'phage' integrase family. XerS subfamily.

The protein resides in the cytoplasm. FtsK is required for recombination. In terms of biological role, site-specific tyrosine recombinase, which acts by catalyzing the cutting and rejoining of the recombining DNA molecules. Essential to convert dimers of the bacterial chromosome into monomers to permit their segregation at cell division. The sequence is that of Tyrosine recombinase XerS from Streptococcus thermophilus (strain ATCC BAA-491 / LMD-9).